A 201-amino-acid polypeptide reads, in one-letter code: Ribosomal RNA large subunit methyltransferase E (201 aa).

Gly-49, Trp-51, Asp-69, Asp-90, and Asp-113 together coordinate S-adenosyl-L-methionine. Lys-153 serves as the catalytic Proton acceptor.

The protein belongs to the class I-like SAM-binding methyltransferase superfamily. RNA methyltransferase RlmE family.

It localises to the cytoplasm. It catalyses the reaction uridine(2552) in 23S rRNA + S-adenosyl-L-methionine = 2'-O-methyluridine(2552) in 23S rRNA + S-adenosyl-L-homocysteine + H(+). In terms of biological role, specifically methylates the uridine in position 2552 of 23S rRNA at the 2'-O position of the ribose in the fully assembled 50S ribosomal subunit. In Desulfotalea psychrophila (strain LSv54 / DSM 12343), this protein is Ribosomal RNA large subunit methyltransferase E.